A 493-amino-acid chain; its full sequence is 3-octaprenyl-4-hydroxybenzoate carboxy-lyase (493 aa).

Asn172 serves as a coordination point for Mn(2+). Residues 175–177 (IYR), 189–191 (RWL), and 194–195 (RG) each bind prenylated FMN. Residue Glu238 participates in Mn(2+) binding. The Proton donor role is filled by Asp287.

The protein belongs to the UbiD family. As to quaternary structure, homohexamer. It depends on prenylated FMN as a cofactor. Requires Mn(2+) as cofactor.

The protein localises to the cell membrane. It carries out the reaction a 4-hydroxy-3-(all-trans-polyprenyl)benzoate + H(+) = a 2-(all-trans-polyprenyl)phenol + CO2. The protein operates within cofactor biosynthesis; ubiquinone biosynthesis. Functionally, catalyzes the decarboxylation of 3-octaprenyl-4-hydroxy benzoate to 2-octaprenylphenol, an intermediate step in ubiquinone biosynthesis. This Shewanella putrefaciens (strain CN-32 / ATCC BAA-453) protein is 3-octaprenyl-4-hydroxybenzoate carboxy-lyase.